The sequence spans 975 residues: MTQQPQEDFERSVEDAQAWMKVIQEQLQVNDNTKGPRAALEARLRETEKICQLESEGMVKVELVLRAAEALLATCQEGQKPEILARLRDIKSQWEETVTYMTHCHSRIEWVWLHWSEYLLAQDEFYRWFQKMVVALEPPVELQLGLKEKQWQLSHAQVLLHNVDNQAVLLDRLLEEAGSLFSRIGDPSVDEDAQKRMKAEYDAVKARAQRRVDLLAQVAQDHEQYREDVNEFQLWLKAVVEKVHSCLGRNCKLATELRLSTLQDIAKDFPRGEESLKRLEEQAVGVIQNTSPLGAEKISGELEEMRGVLEKLRVLWKEEEGRLRGLLQSRGDCEQQIQQLEAELGDFKKSLQRLAQEGLEPTVKTATEDELVAQWRLFSGTRAALASEEPRVDRLQTQLKKLVTFPDLQSLSDSVVATIQEYQSMKGKNTRLHNATRAELWQRFQRPLNDLQLWKALAQRLLDITASLPDLASIHTFLPQIEAALTESSRLKEQLAMLQLKTDLLGSIFGQERAATLLEQVTSSVRDRDLLHNSLLQRKSKLQSLLVQHKDFGVAFDPLNRKLLDLQARIQAEKGLPRDLPGKQVQLLRLQGLQEEGLDLGTQIEAVRPLAHGNSKHQQKVDQISCDQQALQRSLEDLVDRCQQNVREHCTFSHRLSELQLWITMATQTLESHQGDVRLWDAESQEAGLETLLSEIPEKEVQVSLLQALGQLVMKKSSPEGATMVQEELRKLMESWQALRLLEENMLSLMRNQQLQRTEVDTGKKQVFTNNIPKAGFLINPQDPIPRRQHGANPLEGHDLPEDHPQLLRDFEQWLQAENSKLRRIITMRVATAKDLRTREVKLQELEARIPEGQHLFENLLRLRPARDPSNELEDLRYRWMLYKSKLKDSGHLLTESSPGELTAFQKSRRQKRWSPCSLLQKACRVALPLQLLLLLFLLLLFLLPAGEEERSCALANNFARSFALMLRYNGPPPT.

The Cytoplasmic portion of the chain corresponds to methionine 1–arginine 925. Spectrin repeat units lie at residues glutamine 220 to glycine 325 and arginine 647 to arginine 740. A disordered region spans residues leucine 778 to histidine 798. The region spanning cysteine 917–threonine 975 is the KASH domain. Residues valine 926–alanine 946 traverse the membrane as a helical; Anchor for type IV membrane protein segment. At glycine 947 to threonine 975 the chain is on the perinuclear space side.

This sequence belongs to the nesprin family. As to quaternary structure, core component of LINC complexes which are composed of inner nuclear membrane SUN domain-containing proteins coupled to outer nuclear membrane KASH domain-containing nesprins. SUN and KASH domain-containing proteins seem to bind each other promiscuously; however, differentially expression of LINC complex constituents can give rise to specific assemblies. Interacts with SUN1 and SUN2; probably forming respective LINC complexes. Interacts with PLEC (via actin-binding domain). Interacts with DST. Interacts with SYNE1. Interacts (via KASH domain) with TOR1A (ATP-bound); the interaction is required for SYNE3 nuclear envelope localization. In terms of processing, the disulfid bond with SUN1 or SUN2 is required for stability of the respective LINC complex under tensile forces. Ubiquitous.

It localises to the nucleus outer membrane. Its subcellular location is the nucleus envelope. It is found in the rough endoplasmic reticulum. Its function is as follows. As a component of the LINC (LInker of Nucleoskeleton and Cytoskeleton) complex involved in the connection between the nuclear lamina and the cytoskeleton. The nucleocytoplasmic interactions established by the LINC complex play an important role in the transmission of mechanical forces across the nuclear envelope and in nuclear movement and positioning. Probable anchoring protein which tethers the nucleus to the cytoskeleton by binding PLEC which can associate with the intermediate filament system. Plays a role in the regulation of aortic epithelial cell morphology, and is required for flow-induced centrosome polarization and directional migration in aortic endothelial cells. The polypeptide is Nesprin-3 (Syne3) (Mus musculus (Mouse)).